A 742-amino-acid chain; its full sequence is Two-component response regulator-like PRR37 (742 aa).

The region spanning 63–181 (KVLLVDSDDS…ELKNLWQHVW (119 aa)) is the Response regulatory domain. Low complexity predominate over residues 186–195 (SSSGSGSESG). 7 disordered regions span residues 186 to 249 (SSSG…SWTK), 290 to 346 (PCTS…PLQN), 377 to 402 (QQAARAANAPNCSSKVPEGKDKNRDN), 478 to 517 (MKSNSDAAPIKQGSNGSSNNNDMGSTTKNVVTKPSTNKER), 533 to 568 (FHPAQHWTSPANTTGKEKTDEVANNAAKRAQPGEVQ), 590 to 671 (NGGS…GNDM), and 697 to 742 (NFGK…AADR). Residues 236-248 (DNGSGTQAQSSWT) show a composition bias toward polar residues. Positions 299–313 (KQKETNDDFKGKDLE) are enriched in basic and acidic residues. The span at 318–330 (RNLNTAYQSSPNE) shows a compositional bias: polar residues. Residues 331 to 341 (RSIKPTDRRNE) are compositionally biased toward basic and acidic residues. Low complexity predominate over residues 490-502 (GSNGSSNNNDMGS). Residues 503 to 512 (TTKNVVTKPS) are compositionally biased toward polar residues. The segment covering 618 to 634 (NGSNSGSNNGSNGQNGS) has biased composition (low complexity). The segment covering 656 to 667 (GPGGGNGSGSGS) has biased composition (gly residues). Residues 682–724 (RVAAVIKFRQKRKERNFGKKVRYQSRKRLAEQRPRVRGQFVRQ) form the CCT domain. Residues 697–708 (NFGKKVRYQSRK) show a composition bias toward basic residues. A compositionally biased stretch (low complexity) spans 719–731 (GQFVRQAVQDQQQ).

Belongs to the ARR-like family.

It is found in the nucleus. Probable transcription factor involved in the regulation of flowering time under long day (LD) conditions. Functions as a repressor of flowering. Controls flowering time by negatively regulating the expression of HD3A. Acts downstream of the phytochrome B to repress the expression of EHD1, an activator of the flowering promoter genes HD3A and RFT1. Controls photoperiodic flowering response. Seems to be one of the component of the circadian clock. Expression of several members of the ARR-like family is controlled by circadian rhythm. The particular coordinated sequential expression of PRR73, PRR37, PRR95, PRR59 and PPR1 result to circadian waves that may be at the basis of the endogenous circadian clock. This is Two-component response regulator-like PRR37 from Oryza sativa subsp. japonica (Rice).